Here is a 1687-residue protein sequence, read N- to C-terminus: Zinc finger protein 142 (1687 aa).

Disordered stretches follow at residues 1–23 (MTDPLLDSQPASSTGEMDGLCPE) and 83–150 (TLTP…RLEG). A compositionally biased stretch (basic and acidic residues) spans 125–140 (KEEKSDTQKDSQKAVD). At Ser154 the chain carries Phosphoserine. C2H2-type zinc fingers lie at residues 163-185 (HMCPECKRCFKKRTHLVEHLHLH), 219-242 (HHCPLCHYSAVERNALNRHMASMH), and 253-275 (YACPVCREEFRLSQALKEHLKSH). The C2H2-type 4; atypical zinc-finger motif lies at 286-311 (LRCFQEGCSYAAPDRKAFIKHLKETH). 10 C2H2-type zinc fingers span residues 316–340 (VECRHHSCPMLFATAEAMEAHHKSH), 343–366 (FHCPHCDFACSNKHLFRKHKKQGH), 372–395 (LRCTFCPFATFNPVAYQDHVGKMH), 401–423 (HQCPECNFATAHKRVLIRHMLLH), 429–451 (HKCELCDFTCRDVSYLSKHMLTH), 457–479 (YMCTECGYVTKWKHYLRVHMRKH), 485–507 (YQCNQCSYRCHRADQLSSHKLRH), 512–536 (LMCEVCAFACKRKYELQKHMASQHH), 544–567 (YPCHYCSYQSRHKQAVLSHENCKH), and 573–596 (FHCALCDYRTFSNTTLLFHKRKAH). A Glycyl lysine isopeptide (Lys-Gly) (interchain with G-Cter in SUMO2) cross-link involves residue Lys594. Disordered regions lie at residues 613–690 (EPEG…EVEE), 704–798 (LESV…PPLP), 897–935 (KGLPRPDSPIPLQPVLPGTQASEDTESGKPPPASQEAEL), 947–1014 (REPE…SPTE), and 1052–1092 (GRGG…GDGD). Residues 725 to 739 (PLGLEGPDGLEGPEL) show a composition bias toward low complexity. Residues 1061–1075 (TPQTQPDVSPLSNGD) show a composition bias toward polar residues. A compositionally biased stretch (low complexity) spans 1082–1092 (GSTESSSGDGD). 15 consecutive C2H2-type zinc fingers follow at residues 1135–1158 (LHCSLCPFTAPAATALRLHQKRRH), 1171–1194 (LQCGDCGFTCKQSRCMQQHRRLKH), 1200–1222 (HQCPFCDFSTTRRYRLEAHQSRH), 1228–1251 (IPCSSCPQTFGTNSKLRLHRLRVH), 1257–1280 (HFCPLCDYSGYLRHDITRHVNSCH), 1286–1309 (FACSQCEAQFSSETALKQHALRRH), 1328–1351 (LHCSRCGLLCPSPASLRGHTRKQH), 1354–1377 (LECGACQEAFPSRLALDEHRRQQH), 1380–1403 (HRCQLCDFAARERVGLVKHYLEQH), 1424–1446 (LHCPFCDFTCRHQLVLDHHVKGH), 1452–1474 (YKCTDCAYSTKNRQKITWHSRIH), 1480–1502 (YHCHLCPYACADPSRLKYHMRIH), 1508–1530 (YLCPECGYKCKWVNQLKYHMTKH), 1536–1559 (YQCPECEYCTNRADALRVHQETRH), and 1565–1587 (FMCEQCGKAFKTRFLLRTHLRKH). Lys1193 participates in a covalent cross-link: Glycyl lysine isopeptide (Lys-Gly) (interchain with G-Cter in SUMO2). Residue Lys1242 forms a Glycyl lysine isopeptide (Lys-Gly) (interchain with G-Cter in SUMO2) linkage. Residue Lys1591 forms a Glycyl lysine isopeptide (Lys-Gly) (interchain with G-Cter in SUMO2) linkage. 2 C2H2-type zinc fingers span residues 1593–1615 (YVCNVCHRAFRWAAGLRHHALTH) and 1621–1643 (FFCRLCNYKAKQKFQVVKHVRRH). The interval 1638 to 1687 (KHVRRHHPDQADPNQGVGKDPTTPTVHLHDVQLEDPSPPAPAAPHTGPEG) is disordered.

Belongs to the krueppel C2H2-type zinc-finger protein family.

Its subcellular location is the nucleus. Functionally, may be involved in transcriptional regulation. This Homo sapiens (Human) protein is Zinc finger protein 142.